The sequence spans 900 residues: Bifunctional uridylyltransferase/uridylyl-removing enzyme (900 aa).

Residues 1–342 (MPQVDPELFD…PCEQPVQIQP (342 aa)) form a uridylyltransferase region. The segment at 343 to 705 (LNSRFQLRDG…TTQREFESGS (363 aa)) is uridylyl-removing. One can recognise an HD domain in the interval 461–583 (VDAHTLNLIK…VGDQTHLDYL (123 aa)). 2 consecutive ACT domains span residues 706 to 789 (QIFI…IIQR) and 816 to 891 (VLEV…DNGR).

This sequence belongs to the GlnD family. Requires Mg(2+) as cofactor.

The enzyme catalyses [protein-PII]-L-tyrosine + UTP = [protein-PII]-uridylyl-L-tyrosine + diphosphate. It carries out the reaction [protein-PII]-uridylyl-L-tyrosine + H2O = [protein-PII]-L-tyrosine + UMP + H(+). With respect to regulation, uridylyltransferase (UTase) activity is inhibited by glutamine, while glutamine activates uridylyl-removing (UR) activity. Its function is as follows. Modifies, by uridylylation and deuridylylation, the PII regulatory proteins (GlnB and homologs), in response to the nitrogen status of the cell that GlnD senses through the glutamine level. Under low glutamine levels, catalyzes the conversion of the PII proteins and UTP to PII-UMP and PPi, while under higher glutamine levels, GlnD hydrolyzes PII-UMP to PII and UMP (deuridylylation). Thus, controls uridylylation state and activity of the PII proteins, and plays an important role in the regulation of nitrogen assimilation and metabolism. The chain is Bifunctional uridylyltransferase/uridylyl-removing enzyme from Pseudomonas aeruginosa (strain ATCC 15692 / DSM 22644 / CIP 104116 / JCM 14847 / LMG 12228 / 1C / PRS 101 / PAO1).